The sequence spans 227 residues: Cytochrome c oxidase subunit 2 (227 aa).

The Mitochondrial intermembrane segment spans residues 1 to 14; the sequence is MAYPFQLGLQDATS. The helical transmembrane segment at 15-45 threads the bilayer; that stretch reads PIMEELTNFHDHTLMIVFLISSLVLYIISLM. The Mitochondrial matrix segment spans residues 46 to 59; sequence LTTKLTHTSTMDAQ. Residues 60 to 87 traverse the membrane as a helical segment; sequence EVETIWTILPAVILILIALPSLRILYMM. Topologically, residues 88-227 are mitochondrial intermembrane; that stretch reads DEINNPVLTV…YFENWSASMI (140 aa). Cu cation is bound by residues H161, C196, E198, C200, H204, and M207. E198 contributes to the Mg(2+) binding site. Phosphotyrosine is present on Y218.

Belongs to the cytochrome c oxidase subunit 2 family. As to quaternary structure, component of the cytochrome c oxidase (complex IV, CIV), a multisubunit enzyme composed of 14 subunits. The complex is composed of a catalytic core of 3 subunits MT-CO1, MT-CO2 and MT-CO3, encoded in the mitochondrial DNA, and 11 supernumerary subunits COX4I, COX5A, COX5B, COX6A, COX6B, COX6C, COX7A, COX7B, COX7C, COX8 and NDUFA4, which are encoded in the nuclear genome. The complex exists as a monomer or a dimer and forms supercomplexes (SCs) in the inner mitochondrial membrane with NADH-ubiquinone oxidoreductase (complex I, CI) and ubiquinol-cytochrome c oxidoreductase (cytochrome b-c1 complex, complex III, CIII), resulting in different assemblies (supercomplex SCI(1)III(2)IV(1) and megacomplex MCI(2)III(2)IV(2)). Found in a complex with TMEM177, COA6, COX18, COX20, SCO1 and SCO2. Interacts with TMEM177 in a COX20-dependent manner. Interacts with COX20. Interacts with COX16. Cu cation is required as a cofactor.

It localises to the mitochondrion inner membrane. The enzyme catalyses 4 Fe(II)-[cytochrome c] + O2 + 8 H(+)(in) = 4 Fe(III)-[cytochrome c] + 2 H2O + 4 H(+)(out). Functionally, component of the cytochrome c oxidase, the last enzyme in the mitochondrial electron transport chain which drives oxidative phosphorylation. The respiratory chain contains 3 multisubunit complexes succinate dehydrogenase (complex II, CII), ubiquinol-cytochrome c oxidoreductase (cytochrome b-c1 complex, complex III, CIII) and cytochrome c oxidase (complex IV, CIV), that cooperate to transfer electrons derived from NADH and succinate to molecular oxygen, creating an electrochemical gradient over the inner membrane that drives transmembrane transport and the ATP synthase. Cytochrome c oxidase is the component of the respiratory chain that catalyzes the reduction of oxygen to water. Electrons originating from reduced cytochrome c in the intermembrane space (IMS) are transferred via the dinuclear copper A center (CU(A)) of subunit 2 and heme A of subunit 1 to the active site in subunit 1, a binuclear center (BNC) formed by heme A3 and copper B (CU(B)). The BNC reduces molecular oxygen to 2 water molecules using 4 electrons from cytochrome c in the IMS and 4 protons from the mitochondrial matrix. The chain is Cytochrome c oxidase subunit 2 (MT-CO2) from Dacnomys millardi (Millard's rat).